The following is a 451-amino-acid chain: Methionine aminopeptidase 2-2 (451 aa).

Positions 1 to 97 (MAAQVEDDVA…PRVLISDLFP (97 aa)) are disordered. Positions 19-28 (TKPTNGTSQP) are enriched in polar residues. A compositionally biased stretch (acidic residues) spans 35 to 45 (EAEDSDDDAEG). Basic residues predominate over residues 60-73 (KKKKKRKPRKKKKA). Over residues 74–83 (GTSATAGAKS) the composition is skewed to low complexity. H204 is a binding site for substrate. Positions 224, 235, and 304 each coordinate a divalent metal cation. H312 is a binding site for substrate. A divalent metal cation is bound by residues E337 and E432.

It belongs to the peptidase M24A family. Methionine aminopeptidase eukaryotic type 2 subfamily. It depends on Co(2+) as a cofactor. Requires Zn(2+) as cofactor. Mn(2+) serves as cofactor. Fe(2+) is required as a cofactor.

It is found in the cytoplasm. The enzyme catalyses Release of N-terminal amino acids, preferentially methionine, from peptides and arylamides.. Cotranslationally removes the N-terminal methionine from nascent proteins. The N-terminal methionine is often cleaved when the second residue in the primary sequence is small and uncharged (Met-Ala-, Cys, Gly, Pro, Ser, Thr, or Val). The protein is Methionine aminopeptidase 2-2 of Leptosphaeria maculans (strain JN3 / isolate v23.1.3 / race Av1-4-5-6-7-8) (Blackleg fungus).